The chain runs to 252 residues: Imidazole glycerol phosphate synthase subunit HisF (252 aa).

Catalysis depends on residues Asp-11 and Asp-130.

Belongs to the HisA/HisF family. As to quaternary structure, heterodimer of HisH and HisF.

It localises to the cytoplasm. It catalyses the reaction 5-[(5-phospho-1-deoxy-D-ribulos-1-ylimino)methylamino]-1-(5-phospho-beta-D-ribosyl)imidazole-4-carboxamide + L-glutamine = D-erythro-1-(imidazol-4-yl)glycerol 3-phosphate + 5-amino-1-(5-phospho-beta-D-ribosyl)imidazole-4-carboxamide + L-glutamate + H(+). The protein operates within amino-acid biosynthesis; L-histidine biosynthesis; L-histidine from 5-phospho-alpha-D-ribose 1-diphosphate: step 5/9. Functionally, IGPS catalyzes the conversion of PRFAR and glutamine to IGP, AICAR and glutamate. The HisF subunit catalyzes the cyclization activity that produces IGP and AICAR from PRFAR using the ammonia provided by the HisH subunit. This is Imidazole glycerol phosphate synthase subunit HisF from Thermococcus gammatolerans (strain DSM 15229 / JCM 11827 / EJ3).